Reading from the N-terminus, the 254-residue chain is MTSSIRPLLAGNWKMNGTSESLRELRAIASGIDSDRDRCFEALVCVPATLLSRASDILSDENIFLGGQDCHFNDSGPHTGDISACMLKEAGASHVILGHSERRTDYRESDAIVCAKVKAAWRAGLVALICIGETLEERENNTVLDVLAQQLKGSVPAGAMDHNTVIAYEPRWAIGTGKTPTSEDIAQVHGFIRKEVSHRFGDEGHKIRLLYGGSVKPSNASELLETSHVNGALIGGASLKATDFLTICNIYRKL.

12–14 (NWK) is a substrate binding site. Residue H99 is the Electrophile of the active site. E169 acts as the Proton acceptor in catalysis. Substrate contacts are provided by residues G175, S214, and 235-236 (GG).

Belongs to the triosephosphate isomerase family. In terms of assembly, homodimer.

The protein resides in the cytoplasm. The enzyme catalyses D-glyceraldehyde 3-phosphate = dihydroxyacetone phosphate. The protein operates within carbohydrate biosynthesis; gluconeogenesis. Its pathway is carbohydrate degradation; glycolysis; D-glyceraldehyde 3-phosphate from glycerone phosphate: step 1/1. Its function is as follows. Involved in the gluconeogenesis. Catalyzes stereospecifically the conversion of dihydroxyacetone phosphate (DHAP) to D-glyceraldehyde-3-phosphate (G3P). This is Triosephosphate isomerase from Bartonella bacilliformis (strain ATCC 35685 / KC583 / Herrer 020/F12,63).